A 107-amino-acid polypeptide reads, in one-letter code: MAVRCSKIQRTDGRPGHSLQPAKVSFVAGQPLGYYSSWPLFALSHHMVVWYAAEHVYPSSFFFQSKLPPSEVFAYPGMEVFNEYTLYHAWVDEALSGVSKMELYAKA.

The protein localises to the mitochondrion. This is an uncharacterized protein from Arabidopsis thaliana (Mouse-ear cress).